We begin with the raw amino-acid sequence, 428 residues long: Beta-1,3-galactosyl-O-glycosyl-glycoprotein beta-1,6-N-acetylglucosaminyltransferase 4 (428 aa).

Residues 1–12 are Cytoplasmic-facing; the sequence is MRRCAVLHRLRC. The helical; Signal-anchor for type II membrane protein transmembrane segment at 13–30 threads the bilayer; that stretch reads KFYVFVVSLFVVVKLVYL. Residues 31–428 are Lumenal-facing; the sequence is KISMDNSIYI…QLQQCLRRVS (398 aa). Asn-59 carries N-linked (GlcNAc...) asparagine glycosylation. Cystine bridges form between Cys-60–Cys-214, Cys-148–Cys-369, Cys-169–Cys-196, and Cys-378–Cys-410.

It belongs to the glycosyltransferase 14 family.

Its subcellular location is the golgi apparatus membrane. It carries out the reaction a 3-O-[beta-D-galactosyl-(1-&gt;3)-N-acetyl-alpha-D-galactosaminyl]-L-seryl-[protein] + UDP-N-acetyl-alpha-D-glucosamine = 3-O-{beta-D-galactosyl-(1-&gt;3)-[N-acetyl-beta-D-glucosaminyl-(1-&gt;6)]-N-acetyl-alpha-D-galactosaminyl}-L-seryl-[protein] + UDP + H(+). The enzyme catalyses a 3-O-[beta-D-galactosyl-(1-&gt;3)-N-acetyl-alpha-D-galactosaminyl]-L-threonyl-[protein] + UDP-N-acetyl-alpha-D-glucosamine = a 3-O-{beta-D-galactosyl-(1-&gt;3)-[N-acetyl-beta-D-glucosaminyl-(1-&gt;6)]-N-acetyl-alpha-D-galactosaminyl}-L-threonyl-[protein] + UDP + H(+). It functions in the pathway protein modification; protein glycosylation. In terms of biological role, glycosyltransferase that mediates core 2 O-glycan branching, an important step in mucin-type biosynthesis. In Danio rerio (Zebrafish), this protein is Beta-1,3-galactosyl-O-glycosyl-glycoprotein beta-1,6-N-acetylglucosaminyltransferase 4 (gcnt4).